Consider the following 212-residue polypeptide: Glycerol-3-phosphate acyltransferase (212 aa).

Transmembrane regions (helical) follow at residues 3–23 (IIIM…LWIG), 70–90 (IPII…FAII), 110–130 (AGVL…IFLL), 143–163 (ITVA…GFIL), and 164–184 (TDYD…IIIR).

The protein belongs to the PlsY family. In terms of assembly, probably interacts with PlsX.

The protein resides in the cell membrane. It carries out the reaction an acyl phosphate + sn-glycerol 3-phosphate = a 1-acyl-sn-glycero-3-phosphate + phosphate. The protein operates within lipid metabolism; phospholipid metabolism. In terms of biological role, catalyzes the transfer of an acyl group from acyl-phosphate (acyl-PO(4)) to glycerol-3-phosphate (G3P) to form lysophosphatidic acid (LPA). This enzyme utilizes acyl-phosphate as fatty acyl donor, but not acyl-CoA or acyl-ACP. In Streptococcus agalactiae serotype III (strain NEM316), this protein is Glycerol-3-phosphate acyltransferase.